We begin with the raw amino-acid sequence, 311 residues long: 4-hydroxy-tetrahydrodipicolinate synthase (311 aa).

Residue threonine 51 coordinates pyruvate. The active-site Proton donor/acceptor is the tyrosine 140. Lysine 168 acts as the Schiff-base intermediate with substrate in catalysis. A pyruvate-binding site is contributed by isoleucine 209.

Belongs to the DapA family. In terms of assembly, homotetramer; dimer of dimers.

The protein localises to the cytoplasm. The enzyme catalyses L-aspartate 4-semialdehyde + pyruvate = (2S,4S)-4-hydroxy-2,3,4,5-tetrahydrodipicolinate + H2O + H(+). The protein operates within amino-acid biosynthesis; L-lysine biosynthesis via DAP pathway; (S)-tetrahydrodipicolinate from L-aspartate: step 3/4. Catalyzes the condensation of (S)-aspartate-beta-semialdehyde [(S)-ASA] and pyruvate to 4-hydroxy-tetrahydrodipicolinate (HTPA). In Streptococcus pneumoniae (strain 70585), this protein is 4-hydroxy-tetrahydrodipicolinate synthase.